A 208-amino-acid polypeptide reads, in one-letter code: dITP/XTP pyrophosphatase (208 aa).

Substrate is bound at residue 7–12 (SNNAKK). Glutamate 39 and aspartate 68 together coordinate Mg(2+). Aspartate 68 serves as the catalytic Proton acceptor. Substrate contacts are provided by residues serine 69, 162-165 (FGYD), lysine 185, and 190-191 (HR).

This sequence belongs to the HAM1 NTPase family. In terms of assembly, homodimer. Mg(2+) is required as a cofactor.

The catalysed reaction is XTP + H2O = XMP + diphosphate + H(+). The enzyme catalyses dITP + H2O = dIMP + diphosphate + H(+). It carries out the reaction ITP + H2O = IMP + diphosphate + H(+). Pyrophosphatase that catalyzes the hydrolysis of nucleoside triphosphates to their monophosphate derivatives, with a high preference for the non-canonical purine nucleotides XTP (xanthosine triphosphate), dITP (deoxyinosine triphosphate) and ITP. Seems to function as a house-cleaning enzyme that removes non-canonical purine nucleotides from the nucleotide pool, thus preventing their incorporation into DNA/RNA and avoiding chromosomal lesions. In Methylibium petroleiphilum (strain ATCC BAA-1232 / LMG 22953 / PM1), this protein is dITP/XTP pyrophosphatase.